The primary structure comprises 87 residues: Toxin ICK-42 (87 aa).

An N-terminal signal peptide occupies residues 1–19; the sequence is MKPIVYMLLFCAFTVVILG. Cystine bridges form between C40/C54, C40/C77, C53/C66, and C80/C87.

It belongs to the neurotoxin 27 (Jztx-72) family. ICK-41 subfamily. Expressed by the venom gland.

The protein resides in the secreted. Probable neurotoxin with ion channel impairing activity. The sequence is that of Toxin ICK-42 from Trittame loki (Brush-footed trapdoor spider).